Consider the following 153-residue polypeptide: Nucleoside diphosphate kinase (153 aa).

Residues lysine 12, phenylalanine 60, arginine 88, threonine 94, arginine 105, and asparagine 115 each coordinate ATP. Histidine 118 serves as the catalytic Pros-phosphohistidine intermediate.

It belongs to the NDK family. The cofactor is Mg(2+).

The protein resides in the cytoplasm. The enzyme catalyses a 2'-deoxyribonucleoside 5'-diphosphate + ATP = a 2'-deoxyribonucleoside 5'-triphosphate + ADP. It catalyses the reaction a ribonucleoside 5'-diphosphate + ATP = a ribonucleoside 5'-triphosphate + ADP. Functionally, major role in the synthesis of nucleoside triphosphates other than ATP. The ATP gamma phosphate is transferred to the NDP beta phosphate via a ping-pong mechanism, using a phosphorylated active-site intermediate. This chain is Nucleoside diphosphate kinase, found in Natronomonas pharaonis (strain ATCC 35678 / DSM 2160 / CIP 103997 / JCM 8858 / NBRC 14720 / NCIMB 2260 / Gabara) (Halobacterium pharaonis).